Here is a 268-residue protein sequence, read N- to C-terminus: NAD kinase (268 aa).

D45 acts as the Proton acceptor in catalysis. NAD(+)-binding positions include 45-46 (DG), 122-123 (NE), R148, D150, 161-166 (TAYGKS), A185, and Q223.

It belongs to the NAD kinase family. A divalent metal cation is required as a cofactor.

The protein resides in the cytoplasm. It catalyses the reaction NAD(+) + ATP = ADP + NADP(+) + H(+). In terms of biological role, involved in the regulation of the intracellular balance of NAD and NADP, and is a key enzyme in the biosynthesis of NADP. Catalyzes specifically the phosphorylation on 2'-hydroxyl of the adenosine moiety of NAD to yield NADP. This Latilactobacillus sakei subsp. sakei (strain 23K) (Lactobacillus sakei subsp. sakei) protein is NAD kinase.